A 429-amino-acid chain; its full sequence is Glucose-6-phosphate exchanger SLC37A4 (429 aa).

10 helical membrane-spanning segments follow: residues 84–104, 105–125, 139–159, 167–187, 219–239, 260–280, 302–322, 329–349, 368–388, and 394–414; these read LLLV…PVFA, ALWF…GKVL, AILS…ATIL, STLA…LLLI, ELLL…VFGV, LVGS…SIAA, GLLL…RVTV, LWIL…IALF, IVGL…STIA, and STAF…FFLL.

It belongs to the major facilitator superfamily. Organophosphate:Pi antiporter (OPA) (TC 2.A.1.4) family. Mostly expressed in liver and kidney.

The protein resides in the endoplasmic reticulum membrane. The enzyme catalyses D-glucose 6-phosphate(in) + phosphate(out) = D-glucose 6-phosphate(out) + phosphate(in). Inhibited by vanadate and chlorogenic acid. Its function is as follows. Inorganic phosphate and glucose-6-phosphate antiporter of the endoplasmic reticulum. Transports cytoplasmic glucose-6-phosphate into the lumen of the endoplasmic reticulum and translocates inorganic phosphate into the opposite direction. Forms with glucose-6-phosphatase the complex responsible for glucose production through glycogenolysis and gluconeogenesis. Hence, it plays a central role in homeostatic regulation of blood glucose levels. The chain is Glucose-6-phosphate exchanger SLC37A4 from Homo sapiens (Human).